Here is a 416-residue protein sequence, read N- to C-terminus: Zinc finger protein 92 homolog (416 aa).

The KRAB domain occupies Val14–Gly85. Residues Leu86 to Ser125 are disordered. 8 consecutive C2H2-type zinc fingers follow at residues Tyr152 to His174, Tyr180 to His202, Tyr208 to His230, Phe236 to His258, Tyr264 to His286, Tyr292 to His314, Phe320 to His342, and Tyr348 to His370. The tract at residues Ala368–Arg416 is disordered. Residues Ser394–Arg416 are compositionally biased toward low complexity.

Belongs to the krueppel C2H2-type zinc-finger protein family.

It localises to the nucleus. KRAB domain-containing zinc-finger protein that represses B1/Alu SINE transposable elements and modulates the transcription of nearby genes in a tissue-specific manner. It regulates glucose homeostasis and lipid metabolism by modulating the expression of the endocrine cell-defining transcription factor, MAFB, in pancreatic islets and, the fat metabolism regulator, ACACB, in adipose tissue and muscle. In Homo sapiens (Human), this protein is Zinc finger protein 92 homolog (ZFP92).